A 360-amino-acid polypeptide reads, in one-letter code: C-C chemokine receptor-like 2 (360 aa).

Over 1-42 the chain is Extracellular; sequence MDNYTVAPDDEYDVLILDDYLDNSGPDQVPAPEFLSPQQVLQ. Residue Asn3 is glycosylated (N-linked (GlcNAc...) asparagine). Residues 43–63 traverse the membrane as a helical segment; that stretch reads FCCAVFAVGLLDNVLAVFILV. The Cytoplasmic portion of the chain corresponds to 64–73; the sequence is KYKGLKNLGN. A helical membrane pass occupies residues 74-94; it reads IYFLNLALSNLCFLLPLPFWA. The Extracellular portion of the chain corresponds to 95–109; it reads HTAAHGESPGNGTCK. An N-linked (GlcNAc...) asparagine glycan is attached at Asn105. Cysteines 108 and 185 form a disulfide. Residues 110–130 form a helical membrane-spanning segment; it reads VLVGLHSSGLYSEVFSNILLL. Over 131–141 the chain is Cytoplasmic; the sequence is VQGYRVFSQGR. A helical transmembrane segment spans residues 142–162; the sequence is LASIFTTVSCGIVACILAWAM. Residues 163-202 are Extracellular-facing; it reads ATALSLPESVFYEPRMERQKHKCAFGKPHFLPIEAPLWKY. Residues 203-223 form a helical membrane-spanning segment; that stretch reads VLTSKMIILVLAFPLLVFIIC. The Cytoplasmic segment spans residues 224-243; sequence CRQLRRRQSFRERQYDLHKP. A helical transmembrane segment spans residues 244-264; sequence ALVITGVFLLMWAPYNTVLFL. The Extracellular segment spans residues 265–285; the sequence is SAFQEHLSLQDEKSSYHLDAS. The helical transmembrane segment at 286–307 threads the bilayer; sequence VQVTQLVATTHCCVNPLLYLLL. At 308–360 the chain is on the cytoplasmic side; it reads DRKAFMRYLRSLFPRCNDIPYQSSGGYQQAPPREGHGRPIELYSNLHQRQDII.

Belongs to the G-protein coupled receptor 1 family. As to expression, expressed in macrophages, astrocytes, in glial cells. Constitutively expressed by mast cells. Detected in bronchial epithelium in OVA-induced airway inflammation. Up-regulated during dendritic cell (DC) maturation.

The protein localises to the cell membrane. Functionally, receptor for CCL19 and chemerin/RARRES2. Does not appear to be a signaling receptor, but may have a role in modulating chemokine-triggered immune responses by capturing and internalizing CCL19 or by presenting RARRES2 ligand to CMKLR1, a functional signaling receptor. Plays a critical role for the development of Th2 responses. The protein is C-C chemokine receptor-like 2 (Ccrl2) of Mus musculus (Mouse).